The sequence spans 468 residues: MTDRPRLRLHDTAAGAVRDFVPLRDGHVSIYLCGATVQGLPHIGHVRSGVAFDILRRWLIALGYDVAFIRNVTDIDDKILNKAAAAGRPWWEWAATYERAFSAAYDALDVLPPSAEPRATGHITQMVELIERLIEKGHAYTGDGDVYFDVLSYPEYGQLSGHRIDDVHQGEGVASGKRDQRDFTLWKGAKPGEPSWPTPWGRGRPGWHTECVAMAHEYLGPEFDIHCGGMDLVFPHHENEIAQSRAAGDGFARYWLHNGWVTMGGEKMSKSLGNVLAIPAMLQRVRPAELRYYLGSAHYRSMLEFSDTALQDAVKAYVGVEEFLHRVRVRVGAVEPGEPNPRFADALNDDLAVPAALAEVHQARAEGNRALDSGDHEGALRQARSIRAMMGILGCDPLHERWETRDETSAALAAVDVLVRAELQNREKAREQRNWALADEIRNRLKQAGIEVTDTADGPQWTLGGDGK.

Cys33 is a Zn(2+) binding site. A 'HIGH' region motif is present at residues 35–45 (ATVQGLPHIGH). Zn(2+)-binding residues include Cys211, His236, and Glu240. Positions 267–271 (KMSKS) match the 'KMSKS' region motif. ATP is bound at residue Lys270.

This sequence belongs to the class-I aminoacyl-tRNA synthetase family. Monomer. Requires Zn(2+) as cofactor.

It localises to the cytoplasm. It catalyses the reaction tRNA(Cys) + L-cysteine + ATP = L-cysteinyl-tRNA(Cys) + AMP + diphosphate. The protein is Cysteine--tRNA ligase of Mycolicibacterium paratuberculosis (strain ATCC BAA-968 / K-10) (Mycobacterium paratuberculosis).